A 219-amino-acid chain; its full sequence is Probable nicotinate-nucleotide adenylyltransferase (219 aa).

It belongs to the NadD family.

It carries out the reaction nicotinate beta-D-ribonucleotide + ATP + H(+) = deamido-NAD(+) + diphosphate. It participates in cofactor biosynthesis; NAD(+) biosynthesis; deamido-NAD(+) from nicotinate D-ribonucleotide: step 1/1. Its function is as follows. Catalyzes the reversible adenylation of nicotinate mononucleotide (NaMN) to nicotinic acid adenine dinucleotide (NaAD). The protein is Probable nicotinate-nucleotide adenylyltransferase of Erythrobacter litoralis (strain HTCC2594).